Here is a 102-residue protein sequence, read N- to C-terminus: uncharacterized protein (102 aa).

Transmembrane regions (helical) follow at residues 1 to 21 (MVPLILLILLFSKFSTFLRPV), 42 to 62 (SIIDVTYTMHVFYMTIILILV), and 68 to 88 (SIHAFLGSLCLPSHVLDFSIV).

It localises to the membrane. This is an uncharacterized protein from Saccharomyces cerevisiae (strain ATCC 204508 / S288c) (Baker's yeast).